The sequence spans 59 residues: UPF0509 protein KPN78578_12530 (59 aa).

This sequence belongs to the UPF0509 family.

This Klebsiella pneumoniae subsp. pneumoniae (strain ATCC 700721 / MGH 78578) protein is UPF0509 protein KPN78578_12530.